A 688-amino-acid chain; its full sequence is Potassium-transporting ATPase ATP-binding subunit (688 aa).

4 consecutive transmembrane segments (helical) span residues 34 to 54 (PVMF…LAIL), 62 to 82 (ALFT…ANFA), 219 to 239 (VALT…TATL), and 260 to 280 (VLVA…LSAI). Residue aspartate 313 is the 4-aspartylphosphate intermediate of the active site. Residues aspartate 350, glutamate 354, 383–390 (FSAQTRMS), and lysine 401 contribute to the ATP site. The Mg(2+) site is built by aspartate 524 and aspartate 528. 3 helical membrane-spanning segments follow: residues 594–614 (FAII…LNVM), 622–642 (AILS…PLAL), and 667–687 (GLLV…ALIM).

The protein belongs to the cation transport ATPase (P-type) (TC 3.A.3) family. Type IA subfamily. In terms of assembly, the system is composed of three essential subunits: KdpA, KdpB and KdpC.

Its subcellular location is the cell inner membrane. It carries out the reaction K(+)(out) + ATP + H2O = K(+)(in) + ADP + phosphate + H(+). In terms of biological role, part of the high-affinity ATP-driven potassium transport (or Kdp) system, which catalyzes the hydrolysis of ATP coupled with the electrogenic transport of potassium into the cytoplasm. This subunit is responsible for energy coupling to the transport system and for the release of the potassium ions to the cytoplasm. The protein is Potassium-transporting ATPase ATP-binding subunit of Yersinia enterocolitica serotype O:8 / biotype 1B (strain NCTC 13174 / 8081).